Reading from the N-terminus, the 474-residue chain is Protein nucleotidyltransferase YdiU (474 aa).

Gly89, Gly91, Arg92, Lys112, Asp124, Gly125, Arg175, and Arg182 together coordinate ATP. Asp256 serves as the catalytic Proton acceptor. Mg(2+) contacts are provided by Asn257 and Asp266. Position 266 (Asp266) interacts with ATP.

The protein belongs to the SELO family. It depends on Mg(2+) as a cofactor. Mn(2+) serves as cofactor.

It catalyses the reaction L-seryl-[protein] + ATP = 3-O-(5'-adenylyl)-L-seryl-[protein] + diphosphate. The enzyme catalyses L-threonyl-[protein] + ATP = 3-O-(5'-adenylyl)-L-threonyl-[protein] + diphosphate. It carries out the reaction L-tyrosyl-[protein] + ATP = O-(5'-adenylyl)-L-tyrosyl-[protein] + diphosphate. The catalysed reaction is L-histidyl-[protein] + UTP = N(tele)-(5'-uridylyl)-L-histidyl-[protein] + diphosphate. It catalyses the reaction L-seryl-[protein] + UTP = O-(5'-uridylyl)-L-seryl-[protein] + diphosphate. The enzyme catalyses L-tyrosyl-[protein] + UTP = O-(5'-uridylyl)-L-tyrosyl-[protein] + diphosphate. Nucleotidyltransferase involved in the post-translational modification of proteins. It can catalyze the addition of adenosine monophosphate (AMP) or uridine monophosphate (UMP) to a protein, resulting in modifications known as AMPylation and UMPylation. The polypeptide is Protein nucleotidyltransferase YdiU (Corynebacterium glutamicum (strain R)).